The following is a 438-amino-acid chain: 3-phosphoshikimate 1-carboxyvinyltransferase (438 aa).

The 3-phosphoshikimate site is built by Lys-26, Ser-27, and Arg-31. Position 26 (Lys-26) interacts with phosphoenolpyruvate. The phosphoenolpyruvate site is built by Gly-99 and Arg-127. 3-phosphoshikimate is bound by residues Ser-172, Gln-174, Asp-320, and Lys-347. Gln-174 is a phosphoenolpyruvate binding site. The active-site Proton acceptor is Asp-320. The phosphoenolpyruvate site is built by Arg-351 and Arg-392.

The protein belongs to the EPSP synthase family. In terms of assembly, monomer.

The protein localises to the cytoplasm. The catalysed reaction is 3-phosphoshikimate + phosphoenolpyruvate = 5-O-(1-carboxyvinyl)-3-phosphoshikimate + phosphate. Its pathway is metabolic intermediate biosynthesis; chorismate biosynthesis; chorismate from D-erythrose 4-phosphate and phosphoenolpyruvate: step 6/7. Its function is as follows. Catalyzes the transfer of the enolpyruvyl moiety of phosphoenolpyruvate (PEP) to the 5-hydroxyl of shikimate-3-phosphate (S3P) to produce enolpyruvyl shikimate-3-phosphate and inorganic phosphate. This Xanthomonas campestris pv. campestris (strain 8004) protein is 3-phosphoshikimate 1-carboxyvinyltransferase.